We begin with the raw amino-acid sequence, 150 residues long: Protein-export protein SecB (150 aa).

Belongs to the SecB family. Homotetramer, a dimer of dimers. One homotetramer interacts with 1 SecA dimer.

It is found in the cytoplasm. Functionally, one of the proteins required for the normal export of preproteins out of the cell cytoplasm. It is a molecular chaperone that binds to a subset of precursor proteins, maintaining them in a translocation-competent state. It also specifically binds to its receptor SecA. The protein is Protein-export protein SecB of Chromobacterium violaceum (strain ATCC 12472 / DSM 30191 / JCM 1249 / CCUG 213 / NBRC 12614 / NCIMB 9131 / NCTC 9757 / MK).